An 87-amino-acid chain; its full sequence is Putative defensin-like protein 235 (87 aa).

The first 26 residues, 1–26 (MRSATFFLVSCVLMSFVLSHVKEVEA), serve as a signal peptide directing secretion. 3 disulfides stabilise this stretch: Cys-46/Cys-73, Cys-54/Cys-82, and Cys-71/Cys-84.

The protein belongs to the DEFL family.

The protein resides in the secreted. This Arabidopsis thaliana (Mouse-ear cress) protein is Putative defensin-like protein 235 (SCRL26).